The primary structure comprises 945 residues: Leucine--tRNA ligase (945 aa).

The short motif at 43-53 (PYPNGAIHIGH) is the 'HIGH' region element. The short motif at 638-642 (KMSKS) is the 'KMSKS' region element. K641 lines the ATP pocket.

The protein belongs to the class-I aminoacyl-tRNA synthetase family.

Its subcellular location is the cytoplasm. The catalysed reaction is tRNA(Leu) + L-leucine + ATP = L-leucyl-tRNA(Leu) + AMP + diphosphate. The polypeptide is Leucine--tRNA ligase (Pyrobaculum arsenaticum (strain DSM 13514 / JCM 11321 / PZ6)).